Here is a 200-residue protein sequence, read N- to C-terminus: Holliday junction branch migration complex subunit RuvA (200 aa).

The interval 1-64 (MIGHLRGIIV…EDAHTLYGFH (64 aa)) is domain I. Residues 65-143 (NDHERRLFRA…RWHTNDTPSP (79 aa)) are domain II. Residues 144 to 148 (EGLRS) are flexible linker. Residues 149 to 200 (SNTQPTQDAISALMALGYKPQEAKRAIDAIQKPDLSAETLIRLALKQMVLGT) form a domain III region.

The protein belongs to the RuvA family. Homotetramer. Forms an RuvA(8)-RuvB(12)-Holliday junction (HJ) complex. HJ DNA is sandwiched between 2 RuvA tetramers; dsDNA enters through RuvA and exits via RuvB. An RuvB hexamer assembles on each DNA strand where it exits the tetramer. Each RuvB hexamer is contacted by two RuvA subunits (via domain III) on 2 adjacent RuvB subunits; this complex drives branch migration. In the full resolvosome a probable DNA-RuvA(4)-RuvB(12)-RuvC(2) complex forms which resolves the HJ.

The protein resides in the cytoplasm. The RuvA-RuvB-RuvC complex processes Holliday junction (HJ) DNA during genetic recombination and DNA repair, while the RuvA-RuvB complex plays an important role in the rescue of blocked DNA replication forks via replication fork reversal (RFR). RuvA specifically binds to HJ cruciform DNA, conferring on it an open structure. The RuvB hexamer acts as an ATP-dependent pump, pulling dsDNA into and through the RuvAB complex. HJ branch migration allows RuvC to scan DNA until it finds its consensus sequence, where it cleaves and resolves the cruciform DNA. The chain is Holliday junction branch migration complex subunit RuvA from Coxiella burnetii (strain CbuG_Q212) (Coxiella burnetii (strain Q212)).